Consider the following 1104-residue polypeptide: Lon protease homolog, mitochondrial (1104 aa).

Residues 1-58 (MLPLRAFARLAQRPRLSRPTQLARSSLPRPSPSRPAAHYLALAPAPSTRFLHSSPPVL) constitute a mitochondrion transit peptide. Disordered regions lie at residues 8 to 144 (ARLA…KEVA) and 275 to 295 (EGSQ…SEVP). Positions 22–46 (LARSSLPRPSPSRPAAHYLALAPAP) are enriched in low complexity. Positions 80 to 103 (KQDDQVEKPLPDAESSKSAEERAK) are enriched in basic and acidic residues. Over residues 104-128 (SQSSKPDIKASSSDSVSSSAPAPGS) the composition is skewed to low complexity. Residues 129–139 (ADGGSPPGAGG) are compositionally biased toward gly residues. Positions 155–444 (VLAIPITHRP…RALVLLKKEL (290 aa)) constitute a Lon N-terminal domain. Over residues 281-291 (AKGEGEVKSFE) the composition is skewed to basic and acidic residues. 597-604 (GPPGVGKT) lines the ATP pocket. Residues 895–1082 (SPPAGVSTGL…RQVLHEAFRG (188 aa)) enclose the Lon proteolytic domain. Residues Ser987 and Lys1030 contribute to the active site.

It belongs to the peptidase S16 family. Homohexamer or homoheptamer. Organized in a ring with a central cavity.

It is found in the mitochondrion matrix. The catalysed reaction is Hydrolysis of proteins in presence of ATP.. Its function is as follows. ATP-dependent serine protease that mediates the selective degradation of misfolded, unassembled or oxidatively damaged polypeptides as well as certain short-lived regulatory proteins in the mitochondrial matrix. May also have a chaperone function in the assembly of inner membrane protein complexes. Participates in the regulation of mitochondrial gene expression and in the maintenance of the integrity of the mitochondrial genome. Binds to mitochondrial DNA in a site-specific manner. The sequence is that of Lon protease homolog, mitochondrial from Cryptococcus neoformans var. neoformans serotype D (strain JEC21 / ATCC MYA-565) (Filobasidiella neoformans).